Reading from the N-terminus, the 254-residue chain is Distal membrane-arm assembly complex protein 2 (254 aa).

Serine 250 carries the phosphoserine modification.

Belongs to the ATP synthase subunit s family. In terms of assembly, interacts with incompletely assembled mitochondrial NADH:ubiquinone oxidoreductase complex (complex I).

The protein resides in the mitochondrion. Required for the assembly of the mitochondrial NADH:ubiquinone oxidoreductase complex (complex I). Involved in the assembly of the distal region of complex I. In Rattus norvegicus (Rat), this protein is Distal membrane-arm assembly complex protein 2.